Here is a 298-residue protein sequence, read N- to C-terminus: Factor-induced gene 1 protein (298 aa).

4 consecutive transmembrane segments (helical) span residues 17–37 (IFALAFNLISIFLLIFLLIGC), 163–183 (VLMATVILTILMFLFILYVTV), 195–215 (FLLLLSSTIVLTWGIGAMWTH), and 243–263 (VMAWFSFAFLLLDSVVLWLIF). Ser-288 bears the Phosphoserine mark. Residue Thr-293 is modified to Phosphothreonine. Phosphoserine is present on Ser-296.

The protein resides in the membrane. Functionally, required for efficient mating. In Saccharomyces cerevisiae (strain ATCC 204508 / S288c) (Baker's yeast), this protein is Factor-induced gene 1 protein (FIG1).